Here is a 761-residue protein sequence, read N- to C-terminus: Protein transport protein SEC23 C (761 aa).

Zn(2+) is bound by residues C60, C63, C82, and C85. The tract at residues 60 to 85 (CRTCRSVLNPYSVVDFSACNWGCPFC) is zinc finger-like.

This sequence belongs to the SEC23/SEC24 family. SEC24 subfamily. In terms of assembly, component of the coat protein complex II (COPII), composed of at least five proteins: the Sec23/24 complex, the Sec13/31 complex and Sar1.

It is found in the cytoplasmic vesicle. It localises to the COPII-coated vesicle membrane. The protein localises to the endoplasmic reticulum membrane. The protein resides in the membrane. Functionally, component of the coat protein complex II (COPII) which promotes the formation of transport vesicles from the endoplasmic reticulum (ER). The coat has two main functions, the physical deformation of the endoplasmic reticulum membrane into vesicles and the selection of cargo molecules. The polypeptide is Protein transport protein SEC23 C (Arabidopsis thaliana (Mouse-ear cress)).